Consider the following 539-residue polypeptide: Chaperonin GroEL (539 aa).

ATP contacts are provided by residues 29–32 (TIGP), 86–90 (DGTTT), glycine 413, 476–478 (NAA), and aspartate 492.

Belongs to the chaperonin (HSP60) family. As to quaternary structure, forms a cylinder of 14 subunits composed of two heptameric rings stacked back-to-back. Interacts with the co-chaperonin GroES.

It is found in the cytoplasm. The catalysed reaction is ATP + H2O + a folded polypeptide = ADP + phosphate + an unfolded polypeptide.. Its function is as follows. Together with its co-chaperonin GroES, plays an essential role in assisting protein folding. The GroEL-GroES system forms a nano-cage that allows encapsulation of the non-native substrate proteins and provides a physical environment optimized to promote and accelerate protein folding. The chain is Chaperonin GroEL from Staphylococcus epidermidis.